Consider the following 154-residue polypeptide: ATP synthase subunit b (154 aa).

A helical transmembrane segment spans residues Leu-5 to Ile-27.

The protein belongs to the ATPase B chain family. In terms of assembly, F-type ATPases have 2 components, F(1) - the catalytic core - and F(0) - the membrane proton channel. F(1) has five subunits: alpha(3), beta(3), gamma(1), delta(1), epsilon(1). F(0) has three main subunits: a(1), b(2) and c(10-14). The alpha and beta chains form an alternating ring which encloses part of the gamma chain. F(1) is attached to F(0) by a central stalk formed by the gamma and epsilon chains, while a peripheral stalk is formed by the delta and b chains.

Its subcellular location is the cell inner membrane. In terms of biological role, f(1)F(0) ATP synthase produces ATP from ADP in the presence of a proton or sodium gradient. F-type ATPases consist of two structural domains, F(1) containing the extramembraneous catalytic core and F(0) containing the membrane proton channel, linked together by a central stalk and a peripheral stalk. During catalysis, ATP synthesis in the catalytic domain of F(1) is coupled via a rotary mechanism of the central stalk subunits to proton translocation. Its function is as follows. Component of the F(0) channel, it forms part of the peripheral stalk, linking F(1) to F(0). The chain is ATP synthase subunit b from Aliivibrio fischeri (strain ATCC 700601 / ES114) (Vibrio fischeri).